The following is a 1590-amino-acid chain: von Willebrand factor D and EGF domain-containing protein (1590 aa).

Positions 1-20 (MPGGACVLVIALMFLAWGEA) are cleaved as a signal peptide. Residue asparagine 367 is glycosylated (N-linked (GlcNAc...) asparagine). Residues 423–606 (AYCYTFTDPH…EWRILPGKSM (184 aa)) form the VWFD domain. 2 disulfide bridges follow: cysteine 425–cysteine 565 and cysteine 468–cysteine 477. Asparagine 703 and asparagine 968 each carry an N-linked (GlcNAc...) asparagine glycan. In terms of domain architecture, EGF-like 1 spans 1177 to 1216 (TVKSCDCLNGGSCVSDRNFSPGSGVYLCVCLPGFHGSLCE). 3 disulfides stabilise this stretch: cysteine 1181-cysteine 1189, cysteine 1183-cysteine 1204, and cysteine 1206-cysteine 1215. The segment covering 1268 to 1280 (DKSVNKEEDDKNA) has biased composition (basic and acidic residues). The interval 1268–1288 (DKSVNKEEDDKNAQGRKRHVK) is disordered. 6 consecutive EGF-like domains span residues 1294 to 1326 (AFTI…SNCQ), 1358 to 1390 (DEEH…PRCE), 1422 to 1454 (STAL…EHCQ), 1455 to 1486 (NAFC…RRFQ), 1518 to 1550 (NTPI…VRCQ), and 1551 to 1582 (IPIC…VKCE). 17 disulfides stabilise this stretch: cysteine 1298-cysteine 1308, cysteine 1302-cysteine 1314, cysteine 1316-cysteine 1325, cysteine 1362-cysteine 1372, cysteine 1366-cysteine 1378, cysteine 1380-cysteine 1389, cysteine 1426-cysteine 1436, cysteine 1430-cysteine 1442, cysteine 1444-cysteine 1453, cysteine 1458-cysteine 1468, cysteine 1462-cysteine 1474, cysteine 1522-cysteine 1532, cysteine 1526-cysteine 1538, cysteine 1540-cysteine 1549, cysteine 1554-cysteine 1564, cysteine 1558-cysteine 1570, and cysteine 1572-cysteine 1581.

The protein localises to the secreted. This is von Willebrand factor D and EGF domain-containing protein (VWDE) from Homo sapiens (Human).